The chain runs to 500 residues: NAD(P)H-quinone oxidoreductase chain 4, chloroplastic (500 aa).

14 helical membrane-spanning segments follow: residues 4 to 24 (FPWLTLIVVFPIFAGCFIFFL), 35 to 55 (YTMGICLLELLIMTYVFCYHF), 87 to 107 (IGPILLTGFITTLATLAAWPV), 113 to 130 (LFHFLMLAMYSGQIGLFS), 134 to 154 (LLLFFMMWELELIPVYLLLSM), 167 to 187 (FILYTAGGSIFLLIGVLGMGL), 208 to 228 (GLEILLYFGFLIAFAVKLPII), 242 to 262 (HYSTCMLLAGILLKMGAYGLI), 274 to 294 (SIFSPWLVIVGTIQIIYAALT), 305 to 325 (IAYSSVSHMGFIIIGIGSLTN), 330 to 350 (GAILQLLSHGFIGAALFFLGG), 386 to 406 (LALPGMSGFVAELMVFLGIIT), 416 to 436 (IIITLVMAIGIILTPIYLLSM), and 463 to 483 (FVSICIFLPVIAIGIYPDLVI).

The protein belongs to the complex I subunit 4 family.

The protein localises to the plastid. It is found in the chloroplast thylakoid membrane. The catalysed reaction is a plastoquinone + NADH + (n+1) H(+)(in) = a plastoquinol + NAD(+) + n H(+)(out). It catalyses the reaction a plastoquinone + NADPH + (n+1) H(+)(in) = a plastoquinol + NADP(+) + n H(+)(out). This is NAD(P)H-quinone oxidoreductase chain 4, chloroplastic from Lemna minor (Common duckweed).